Reading from the N-terminus, the 161-residue chain is Ribosome maturation factor RimP (161 aa).

This sequence belongs to the RimP family.

The protein resides in the cytoplasm. Functionally, required for maturation of 30S ribosomal subunits. The sequence is that of Ribosome maturation factor RimP from Rickettsia felis (strain ATCC VR-1525 / URRWXCal2) (Rickettsia azadi).